Reading from the N-terminus, the 632-residue chain is MGIEWEGVKVEIGELVVEGDSESEMEGPTRRELLPWDRTLASVYDLAVVPGDSEEERREVARTIVTLCCEGTAGLISTARLVVELLRQTGENLDPGFDAETPLPLYETLLGSSPECADDLEAGLSYAERELTSSVSELLRSHSLKGYESVAMHAGAIGLLAMEIADATPSTLMEVTESEEVFEIGTDDLPRRPTVLLVGHLPLLGHIITEELGTLARQVELVGLTHTAWPNREDHVRVVGPLSMYHEYLSSGFADVVVVDGACPGEDVIEAAREGGSKLVATVGARVADLLDVTDYPVEEAVEVLVTEEDAVYVEEPIKAVEIAAWAALRVEGSRDRREPPRRAFRVGPPTRLTDVVIRNVGVPVVAGNIPGIVVLVSCPEKSADVEEPAKIAEVLLERGYLVLVPGCLAVALGSYLDDDGKTLYERYPDTLLNTGPCTSAAHLVGACIRVGVIFGKLPIRGEFVRVADYVLNRVGACVIAWGGEYSEHLVSAAYGVTRWGIPVVLGPDPEAGSLLVEKNPKVIDACSGEEVEDPTPEHLRCVVSDWKEAAITAARLCMRPNDTPEGRQNKVESYVELYRELYGELPPDLDLLIRDESDIPVTLRSEIRELLEETGWTPRSRASDPTLLPEG.

Residues histidine 200, histidine 226, cysteine 263, cysteine 379, cysteine 408, and cysteine 438 each coordinate [Ni-4Fe-4S] cluster.

Belongs to the Ni-containing carbon monoxide dehydrogenase family.

Part of the ACDS complex that catalyzes the reversible cleavage of acetyl-CoA, allowing autotrophic growth from CO(2). The alpha-epsilon subcomponent functions as a carbon monoxide dehydrogenase. This Methanopyrus kandleri (strain AV19 / DSM 6324 / JCM 9639 / NBRC 100938) protein is Putative acetyl-CoA decarbonylase/synthase complex subunit alpha-like (cdhA2).